The sequence spans 255 residues: uncharacterized protein (255 aa).

2 helical membrane passes run 99–119 and 146–166; these read ISLIYLLTVGMLINVCVITSF and YIGSAFITPALYFTLTLILFL.

The protein resides in the mitochondrion membrane. This is an uncharacterized protein from Schizosaccharomyces pombe (strain 972 / ATCC 24843) (Fission yeast).